The chain runs to 1164 residues: DNA-directed RNA polymerase 133 kDa polypeptide (1164 aa).

This sequence belongs to the RNA polymerase beta chain family. As to quaternary structure, the DNA-dependent RNA polymerase used for intermediate and late genes expression consists of eight subunits 147 kDa, 133 kDa, 35 kDa, 30 kDa, 22 kDa, 19 kDa, 18 kDa and 7 kDa totalling more than 500 kDa in mass. The same holoenzyme, with the addition of the transcription-specificity factor RAP94, is used for early gene expression.

The protein resides in the virion. It catalyses the reaction RNA(n) + a ribonucleoside 5'-triphosphate = RNA(n+1) + diphosphate. Its function is as follows. Part of the DNA-dependent RNA polymerase which catalyzes the transcription of viral DNA into RNA using the four ribonucleoside triphosphates as substrates. Responsible for the transcription of early, intermediate and late genes. DNA-dependent RNA polymerase associates with the early transcription factor (ETF), itself composed of D6 and A7, thereby allowing the early genes transcription. Late transcription, and probably also intermediate transcription, require newly synthesized RNA polymerase. This chain is DNA-directed RNA polymerase 133 kDa polypeptide (RPO132), found in Homo sapiens (Human).